We begin with the raw amino-acid sequence, 994 residues long: Regulator of telomere elongation helicase 1 homolog (994 aa).

One can recognise a Helicase ATP-binding domain in the interval 15–300; that stretch reads PKLSVKFPFE…EETARSEADA (286 aa). 50 to 57 lines the ATP pocket; the sequence is SPTGTGKT. [4Fe-4S] cluster contacts are provided by Cys-142, Cys-160, Cys-169, and Cys-208. Positions 251–254 match the DEAH box motif; that stretch reads DEAH. Residues 876–895 form a disordered region; sequence FKIETPGPSTSTLTQKSEPP. Positions 882 to 892 are enriched in polar residues; it reads GPSTSTLTQKS.

It belongs to the helicase family. RAD3/XPD subfamily.

The protein resides in the nucleus. The enzyme catalyses ATP + H2O = ADP + phosphate + H(+). A probable ATP-dependent DNA helicase implicated in DNA repair and the maintenance of genomic stability. Acts as an anti-recombinase to counteract toxic recombination and limit crossover during meiosis. Regulates meiotic recombination and crossover homeostasis by physically dissociating strand invasion events and thereby promotes noncrossover repair by meiotic synthesis dependent strand annealing (SDSA) as well as disassembly of D loop recombination intermediates. The chain is Regulator of telomere elongation helicase 1 homolog from Caenorhabditis elegans.